Reading from the N-terminus, the 1212-residue chain is uncharacterized protein (1212 aa).

Residues 783-802 are disordered; it reads TRQDASGGSSSGTKKGEKLQ.

This is an uncharacterized protein from Human herpesvirus 6B (strain Z29) (HHV-6 variant B).